A 193-amino-acid chain; its full sequence is Xanthine phosphoribosyltransferase (193 aa).

Xanthine is bound by residues L20 and T27. 128-132 contributes to the 5-phospho-alpha-D-ribose 1-diphosphate binding site; sequence ANGQA. Residue K156 coordinates xanthine.

Belongs to the purine/pyrimidine phosphoribosyltransferase family. Xpt subfamily. As to quaternary structure, homodimer.

The protein resides in the cytoplasm. It carries out the reaction XMP + diphosphate = xanthine + 5-phospho-alpha-D-ribose 1-diphosphate. Its pathway is purine metabolism; XMP biosynthesis via salvage pathway; XMP from xanthine: step 1/1. In terms of biological role, converts the preformed base xanthine, a product of nucleic acid breakdown, to xanthosine 5'-monophosphate (XMP), so it can be reused for RNA or DNA synthesis. This Streptococcus pyogenes serotype M5 (strain Manfredo) protein is Xanthine phosphoribosyltransferase.